The following is a 72-amino-acid chain: Late effector protein 1 (72 aa).

The first 22 residues, 1–22 (MKCYLVVVVAALCTLVAQGSVG), serve as a signal peptide directing secretion. Residue Asn66 is glycosylated (N-linked (GlcNAc...) asparagine).

It belongs to the lep1 family. As to quaternary structure, interacts at the cell wall with secreted rep1 repellent peptides.

The protein resides in the secreted. The protein localises to the cell wall. In terms of biological role, core effector contributing to spore formation and tumor formation at the host plant. Modulates surface hydrophobicity promoting cell-cell or cell-surface contacts. Lep1 and rep1 interact in aerial hyphae to form a strong hydrophobic layer. Plays a crucial role in hyphal aggregation that might be a prerequisite for strong proliferation of diploid cells and for induction of the morphological changes associated with spore formation. This chain is Late effector protein 1, found in Sporisorium reilianum (strain SRZ2) (Maize head smut fungus).